The following is a 72-amino-acid chain: MESNGASVQYNRWSEDNITLQEPQSRSRLLGIYNRVFTGRLVIMFKIAASLTVMVVMYIAGYITGFYVHQCG.

Residues methionine 1–arginine 40 are Extracellular-facing. Residues leucine 41–glycine 61 traverse the membrane as a helical; Signal-anchor for type II membrane protein segment. Over tyrosine 62–glycine 72 the chain is Cytoplasmic.

The protein belongs to the SMIM1 family. Homooligomer; disulfide-linked.

Its subcellular location is the cell membrane. In terms of biological role, regulator of red blood cells formation. In Danio rerio (Zebrafish), this protein is Small integral membrane protein 1 (smim1).